Reading from the N-terminus, the 120-residue chain is MFKFILLCFCINFAFSSPVIQFFIEDEIKLEQPQPIIITSKNKNLPQILFKNTYDNNNIENVGGSCYCTNYMGAIDQGITQMCCSSSGGKMSGNICISNWSSSGFGNCCKATGAYYGGCF.

The N-terminal stretch at 1–16 (MFKFILLCFCINFAFS) is a signal peptide.

This is an uncharacterized protein from Acheta domesticus (House cricket).